The following is a 622-amino-acid chain: Chaperone protein HscA homolog (622 aa).

It belongs to the heat shock protein 70 family.

Its function is as follows. Chaperone involved in the maturation of iron-sulfur cluster-containing proteins. Has a low intrinsic ATPase activity which is markedly stimulated by HscB. This is Chaperone protein HscA homolog from Burkholderia pseudomallei (strain 1710b).